The following is a 291-amino-acid chain: uncharacterized protein (291 aa).

Transmembrane regions (helical) follow at residues 42–62 and 86–106; these read IFFF…RALW and TIFP…LALD.

It belongs to the cytochrome c oxidase subunit 2 family.

The protein resides in the mitochondrion membrane. This is an uncharacterized protein from Arabidopsis thaliana (Mouse-ear cress).